A 270-amino-acid chain; its full sequence is Formamidopyrimidine-DNA glycosylase (270 aa).

The Schiff-base intermediate with DNA role is filled by proline 2. Residue glutamate 3 is the Proton donor of the active site. Lysine 58 functions as the Proton donor; for beta-elimination activity in the catalytic mechanism. Positions 90, 109, and 152 each coordinate DNA. The FPG-type zinc finger occupies 237–270 (RVYGREGEPCQCGGVVKRIVQGGRSTFFCPRCQK). Catalysis depends on arginine 260, which acts as the Proton donor; for delta-elimination activity.

This sequence belongs to the FPG family. As to quaternary structure, monomer. Zn(2+) is required as a cofactor.

It catalyses the reaction Hydrolysis of DNA containing ring-opened 7-methylguanine residues, releasing 2,6-diamino-4-hydroxy-5-(N-methyl)formamidopyrimidine.. The enzyme catalyses 2'-deoxyribonucleotide-(2'-deoxyribose 5'-phosphate)-2'-deoxyribonucleotide-DNA = a 3'-end 2'-deoxyribonucleotide-(2,3-dehydro-2,3-deoxyribose 5'-phosphate)-DNA + a 5'-end 5'-phospho-2'-deoxyribonucleoside-DNA + H(+). In terms of biological role, involved in base excision repair of DNA damaged by oxidation or by mutagenic agents. Acts as a DNA glycosylase that recognizes and removes damaged bases. Has a preference for oxidized purines, such as 7,8-dihydro-8-oxoguanine (8-oxoG). Has AP (apurinic/apyrimidinic) lyase activity and introduces nicks in the DNA strand. Cleaves the DNA backbone by beta-delta elimination to generate a single-strand break at the site of the removed base with both 3'- and 5'-phosphates. The chain is Formamidopyrimidine-DNA glycosylase from Novosphingobium aromaticivorans (strain ATCC 700278 / DSM 12444 / CCUG 56034 / CIP 105152 / NBRC 16084 / F199).